The sequence spans 478 residues: MTVPGHRTDLPAELQRVHMVGIGGAGMSGIARILLDRGGLVSGSDAKESRGVIALRARGAEIRIGHDPSALDMLAGGPTAVVTTHAAIPKTNPELVEARRRGIPVLLRPAVLARLMAGHTTLMVTGTHGKTTTTSMLIVALQHSGFDPSFAVGGDLGEAGTNAHHGSGSSFVAEADESDGSLLEYRPDIVVVTNIEADHLDFFGSVEAYTEVFDRFAGRIDPGGALVVCVDDPGARALAERLSGSGLRVLRYGSTGTGALDATLLEWTQQGTGAVASIALRTEARPLTMRLSVPGRHMALNALGALLAAREAGADLESVLDGLAGFEGVRRRFELVGSANGVRVFDDYAHHPTEVRATLTALRAVVDQAGSGRAIVVFQPHLYSRTVTFASEFGAALSAADEVFVLDVYAAREQPLAGVSGATVADAVSAPVTYLPDFSAVAARVAASVAPGDVVVTMGAGDVTLLGREILAEVEARA.

126 to 132 contributes to the ATP binding site; the sequence is GTHGKTT.

This sequence belongs to the MurCDEF family.

Its subcellular location is the cytoplasm. It carries out the reaction UDP-N-acetyl-alpha-D-muramate + L-alanine + ATP = UDP-N-acetyl-alpha-D-muramoyl-L-alanine + ADP + phosphate + H(+). It participates in cell wall biogenesis; peptidoglycan biosynthesis. Its function is as follows. Cell wall formation. The polypeptide is UDP-N-acetylmuramate--L-alanine ligase (Mycolicibacterium vanbaalenii (strain DSM 7251 / JCM 13017 / BCRC 16820 / KCTC 9966 / NRRL B-24157 / PYR-1) (Mycobacterium vanbaalenii)).